The following is a 290-amino-acid chain: 4-hydroxy-tetrahydrodipicolinate synthase (290 aa).

Thr48 lines the pyruvate pocket. Tyr137 functions as the Proton donor/acceptor in the catalytic mechanism. Residue Lys165 is the Schiff-base intermediate with substrate of the active site. Ile206 contacts pyruvate.

The protein belongs to the DapA family. In terms of assembly, homotetramer; dimer of dimers.

It localises to the cytoplasm. The enzyme catalyses L-aspartate 4-semialdehyde + pyruvate = (2S,4S)-4-hydroxy-2,3,4,5-tetrahydrodipicolinate + H2O + H(+). The protein operates within amino-acid biosynthesis; L-lysine biosynthesis via DAP pathway; (S)-tetrahydrodipicolinate from L-aspartate: step 3/4. In terms of biological role, catalyzes the condensation of (S)-aspartate-beta-semialdehyde [(S)-ASA] and pyruvate to 4-hydroxy-tetrahydrodipicolinate (HTPA). This Enterococcus faecalis (strain ATCC 700802 / V583) protein is 4-hydroxy-tetrahydrodipicolinate synthase.